A 255-amino-acid polypeptide reads, in one-letter code: Glutamate racemase (255 aa).

Substrate contacts are provided by residues 7-8 (DS) and 39-40 (YG). The active-site Proton donor/acceptor is the cysteine 70. A substrate-binding site is contributed by 71–72 (NT). The active-site Proton donor/acceptor is the cysteine 181. Position 182–183 (182–183 (TH)) interacts with substrate.

Belongs to the aspartate/glutamate racemases family.

It catalyses the reaction L-glutamate = D-glutamate. Its pathway is cell wall biogenesis; peptidoglycan biosynthesis. Its function is as follows. Provides the (R)-glutamate required for cell wall biosynthesis. The protein is Glutamate racemase of Helicobacter pylori (strain G27).